The primary structure comprises 877 residues: Leucine--tRNA ligase (877 aa).

The short motif at 43-53 (PYPSGRIHMGH) is the 'HIGH' region element. A 'KMSKS' region motif is present at residues 628-632 (KMSKS). Position 631 (Lys-631) interacts with ATP.

The protein belongs to the class-I aminoacyl-tRNA synthetase family.

It is found in the cytoplasm. It catalyses the reaction tRNA(Leu) + L-leucine + ATP = L-leucyl-tRNA(Leu) + AMP + diphosphate. In Brucella abortus (strain S19), this protein is Leucine--tRNA ligase.